Consider the following 445-residue polypeptide: Glycine--tRNA ligase (445 aa).

Positions 97 and 145 each coordinate substrate. ATP-binding positions include 177–179 (RNE), 187–192 (FRTCEF), 262–263 (EI), and 308–311 (GLTR). 192–196 (FEQME) is a binding site for substrate. 304–308 (ETSAG) is a binding site for substrate.

Belongs to the class-II aminoacyl-tRNA synthetase family. Homodimer.

It is found in the cytoplasm. The enzyme catalyses tRNA(Gly) + glycine + ATP = glycyl-tRNA(Gly) + AMP + diphosphate. Functionally, catalyzes the attachment of glycine to tRNA(Gly). This is Glycine--tRNA ligase from Borreliella afzelii (strain PKo) (Borrelia afzelii).